A 127-amino-acid polypeptide reads, in one-letter code: Large ribosomal subunit protein bL17 (127 aa).

The protein belongs to the bacterial ribosomal protein bL17 family. Part of the 50S ribosomal subunit. Contacts protein L32.

The polypeptide is Large ribosomal subunit protein bL17 (Legionella pneumophila (strain Corby)).